Reading from the N-terminus, the 94-residue chain is CRISPR-associated endoribonuclease Cas2 (94 aa).

A Mg(2+)-binding site is contributed by Asp-11.

This sequence belongs to the CRISPR-associated endoribonuclease Cas2 protein family. As to quaternary structure, homodimer, forms a heterotetramer with a Cas1 homodimer. The cofactor is Mg(2+).

Functionally, CRISPR (clustered regularly interspaced short palindromic repeat), is an adaptive immune system that provides protection against mobile genetic elements (viruses, transposable elements and conjugative plasmids). CRISPR clusters contain sequences complementary to antecedent mobile elements and target invading nucleic acids. CRISPR clusters are transcribed and processed into CRISPR RNA (crRNA). Functions as a ssRNA-specific endoribonuclease. Involved in the integration of spacer DNA into the CRISPR cassette. This Allochromatium vinosum (strain ATCC 17899 / DSM 180 / NBRC 103801 / NCIMB 10441 / D) (Chromatium vinosum) protein is CRISPR-associated endoribonuclease Cas2.